Here is a 420-residue protein sequence, read N- to C-terminus: tRNA(Ile)-lysidine synthase (420 aa).

Ser-28–Ser-33 provides a ligand contact to ATP.

The protein belongs to the tRNA(Ile)-lysidine synthase family.

Its subcellular location is the cytoplasm. It carries out the reaction cytidine(34) in tRNA(Ile2) + L-lysine + ATP = lysidine(34) in tRNA(Ile2) + AMP + diphosphate + H(+). Its function is as follows. Ligates lysine onto the cytidine present at position 34 of the AUA codon-specific tRNA(Ile) that contains the anticodon CAU, in an ATP-dependent manner. Cytidine is converted to lysidine, thus changing the amino acid specificity of the tRNA from methionine to isoleucine. This chain is tRNA(Ile)-lysidine synthase, found in Hydrogenovibrio crunogenus (strain DSM 25203 / XCL-2) (Thiomicrospira crunogena).